The sequence spans 422 residues: Tk-subtilisin (422 aa).

The signal sequence occupies residues 1 to 24 (MKKSIALVLSIVLLAALFAVPASA). Positions 25–106 (GEQNTIRVIV…SWLGGGSTQP (82 aa)) are excised as a propeptide. The 307-residue stretch at 111 to 417 (PWGIERVKAP…YGVVRAALAV (307 aa)) folds into the Peptidase S8 domain. Residues Asp139, His177, and Ser348 each act as charge relay system in the active site.

It belongs to the peptidase S8 family. As to quaternary structure, monomer. Ca(2+) is required as a cofactor.

Its subcellular location is the secreted. Functionally, has a broad substrate specificity with a slight preference to large hydrophobic amino acid residues at the P1 position. The chain is Tk-subtilisin from Thermococcus kodakarensis (strain ATCC BAA-918 / JCM 12380 / KOD1) (Pyrococcus kodakaraensis (strain KOD1)).